Here is a 193-residue protein sequence, read N- to C-terminus: ATP-dependent Clp protease proteolytic subunit 2 (193 aa).

Residue Ser98 is the Nucleophile of the active site. Residue His123 is part of the active site.

Belongs to the peptidase S14 family. Fourteen ClpP subunits assemble into 2 heptameric rings which stack back to back to give a disk-like structure with a central cavity, resembling the structure of eukaryotic proteasomes.

It is found in the cytoplasm. It carries out the reaction Hydrolysis of proteins to small peptides in the presence of ATP and magnesium. alpha-casein is the usual test substrate. In the absence of ATP, only oligopeptides shorter than five residues are hydrolyzed (such as succinyl-Leu-Tyr-|-NHMec, and Leu-Tyr-Leu-|-Tyr-Trp, in which cleavage of the -Tyr-|-Leu- and -Tyr-|-Trp bonds also occurs).. Its function is as follows. Cleaves peptides in various proteins in a process that requires ATP hydrolysis. Has a chymotrypsin-like activity. Plays a major role in the degradation of misfolded proteins. This chain is ATP-dependent Clp protease proteolytic subunit 2, found in Bacillus cereus (strain ATCC 10987 / NRS 248).